The primary structure comprises 797 residues: Probable exo-1,4-beta-xylosidase xlnD (797 aa).

A signal peptide spans 1-20; sequence MPGAASIVAVLAALLPTALG. Residues asparagine 23, asparagine 87, asparagine 142, and asparagine 237 are each glycosylated (N-linked (GlcNAc...) asparagine). Aspartate 310 is a catalytic residue. N-linked (GlcNAc...) asparagine glycans are attached at residues asparagine 326, asparagine 391, asparagine 404, asparagine 442, asparagine 479, asparagine 521, asparagine 617, asparagine 644, asparagine 657, asparagine 684, and asparagine 706.

The protein belongs to the glycosyl hydrolase 3 family.

The protein resides in the secreted. It carries out the reaction Hydrolysis of (1-&gt;4)-beta-D-xylans, to remove successive D-xylose residues from the non-reducing termini.. Its pathway is glycan degradation; xylan degradation. Its function is as follows. Xylan 1,4-beta-xylosidase involved in the hydrolysis of xylan, a major structural heterogeneous polysaccharide found in plant biomass representing the second most abundant polysaccharide in the biosphere, after cellulose. The sequence is that of Probable exo-1,4-beta-xylosidase xlnD (xlnD) from Aspergillus flavus (strain ATCC 200026 / FGSC A1120 / IAM 13836 / NRRL 3357 / JCM 12722 / SRRC 167).